The following is a 208-amino-acid chain: Probable hydrolase YcaC (208 aa).

C118 is an active-site residue.

Homooctamer composed of two tetrameric rings.

The sequence is that of Probable hydrolase YcaC (ycaC) from Escherichia coli (strain K12).